Reading from the N-terminus, the 399-residue chain is Phosphoglycerate kinase (399 aa).

Substrate-binding positions include 22 to 24 (DFN), arginine 38, 61 to 64 (HLGR), arginine 120, and arginine 153. ATP is bound by residues lysine 204, glutamate 326, and 352-355 (GGDT).

The protein belongs to the phosphoglycerate kinase family. As to quaternary structure, monomer.

It is found in the cytoplasm. The enzyme catalyses (2R)-3-phosphoglycerate + ATP = (2R)-3-phospho-glyceroyl phosphate + ADP. Its pathway is carbohydrate degradation; glycolysis; pyruvate from D-glyceraldehyde 3-phosphate: step 2/5. The sequence is that of Phosphoglycerate kinase from Pelobacter propionicus (strain DSM 2379 / NBRC 103807 / OttBd1).